We begin with the raw amino-acid sequence, 224 residues long: Mammalian ependymin-related protein 1 (224 aa).

Residues 1–37 form the signal peptide; it reads MPARAPRRLVQGPRGTWLLGSLWVWVLCGLGMAGSLG. Disulfide bonds link Cys42–Cys172, Cys88–Cys222, and Cys113–Cys210. Asn130 and Asn182 each carry an N-linked (GlcNAc...) asparagine glycan.

Belongs to the ependymin family. As to quaternary structure, homodimer. N-glycosylated; the glycan contains mannose-6-phosphate moieties. Detected in brain, small intestine and in soleus, extensor digitorum longus and white gastrocnemius (at protein level). Detected in brain and skeletal muscle, and at lower leavels in heart.

It localises to the lysosome lumen. The protein localises to the secreted. Functionally, binds anionic lipids and gangliosides at acidic pH. The polypeptide is Mammalian ependymin-related protein 1 (Epdr1) (Mus musculus (Mouse)).